A 449-amino-acid polypeptide reads, in one-letter code: Xylose isomerase (449 aa).

Catalysis depends on residues His-103 and Asp-106. Positions 234, 270, 273, 298, 309, 311, and 342 each coordinate Mg(2+).

Belongs to the xylose isomerase family. As to quaternary structure, homotetramer. Mg(2+) serves as cofactor.

It localises to the cytoplasm. The enzyme catalyses alpha-D-xylose = alpha-D-xylulofuranose. This Levilactobacillus brevis (strain ATCC 367 / BCRC 12310 / CIP 105137 / JCM 1170 / LMG 11437 / NCIMB 947 / NCTC 947) (Lactobacillus brevis) protein is Xylose isomerase.